The primary structure comprises 254 residues: ATP-dependent L-serine kinase SbnI (254 aa).

The active site involves Glu20. Ser33 contributes to the ADP binding site. Ile57 is a binding site for O-phospho-L-serine. Positions 58, 59, 61, and 62 each coordinate ADP. Residues Gly59 and His61 each contribute to the O-phospho-L-serine site. Trp98 and Arg229 together coordinate O-phospho-L-serine.

Forms dimers and tetramers in solution. Predominantly forms dimers. Dimerization/oligomerization is not essential for kinase activity.

The catalysed reaction is L-serine + ATP = O-phospho-L-serine + ADP + H(+). Its pathway is siderophore biosynthesis. Its activity is regulated as follows. Binds heme and heme binding inhibits DNA binding. Free serine kinase that uses ATP to phosphorylate L-serine to yield O-phospho-L-serine and ADP. O-phospho-L-serine serves as a substrate for SbnA and is a precursor for staphyloferrin B biosynthesis. Is also a DNA-binding regulatory protein that senses heme to control gene expression for siderophore biosynthesis. Binds to DNA within the sbnC coding region and is required for expression of genes in the sbn operon from sbnD onward. This Staphylococcus aureus (strain NCTC 8325 / PS 47) protein is ATP-dependent L-serine kinase SbnI.